Here is a 367-residue protein sequence, read N- to C-terminus: DNA polymerase IV (367 aa).

Positions 14-198 (IIHIDMDAFF…LPIEKFHGVG (185 aa)) constitute a UmuC domain. Residues aspartate 18 and aspartate 116 each coordinate Mg(2+). Residue glutamate 117 is part of the active site.

The protein belongs to the DNA polymerase type-Y family. Monomer. The cofactor is Mg(2+).

The protein resides in the cytoplasm. The enzyme catalyses DNA(n) + a 2'-deoxyribonucleoside 5'-triphosphate = DNA(n+1) + diphosphate. In terms of biological role, poorly processive, error-prone DNA polymerase involved in untargeted mutagenesis. Copies undamaged DNA at stalled replication forks, which arise in vivo from mismatched or misaligned primer ends. These misaligned primers can be extended by PolIV. Exhibits no 3'-5' exonuclease (proofreading) activity. May be involved in translesional synthesis, in conjunction with the beta clamp from PolIII. This Streptococcus thermophilus (strain CNRZ 1066) protein is DNA polymerase IV.